We begin with the raw amino-acid sequence, 778 residues long: Degenerin deg-1 (778 aa).

Residues 1 to 82 lie on the Cytoplasmic side of the membrane; the sequence is MSNHHSKTKK…IARNSFSKLM (82 aa). Residues 83–103 form a helical membrane-spanning segment; that stretch reads WGLIIFSFLLMFAYQASKLIF. Over 104-711 the chain is Extracellular; it reads KFSAHEKITD…LVNLIADFGG (608 aa). Basic and acidic residues predominate over residues 154–165; the sequence is NAKTHSKSEGEK. Disordered stretches follow at residues 154–180 and 201–220; these read NAKTHSKSEGEKKKPKVSRKQHSDASQ and SNKTLQSQNKSGRRRSQRSI. N202, N209, N272, and N342 each carry an N-linked (GlcNAc...) asparagine glycan. Residues 346 to 369 show a composition bias toward low complexity; the sequence is TSTTTTTTTTPPPTTTSTTTTTTT. Positions 346-380 are disordered; sequence TSTTTTTTTTPPPTTTSTTTTTTTTPPPTTTARPN. Residues N473, N492, and N606 are each glycosylated (N-linked (GlcNAc...) asparagine). A helical transmembrane segment spans residues 712–732; that stretch reads HLGLWLGFSVITVMEVCVLLV. At 733–778 the chain is on the cytoplasmic side; it reads DMISLFFKSRHEEKLLRQSTKRKDVPEDKRQITVGSGRKSDAFVSI.

This sequence belongs to the amiloride-sensitive sodium channel (TC 1.A.6) family.

The protein localises to the membrane. In terms of biological role, probable sodium channel subunit. Required by a subset of neurons. The protein is Degenerin deg-1 of Caenorhabditis elegans.